A 569-amino-acid chain; its full sequence is Proline--tRNA ligase (569 aa).

Belongs to the class-II aminoacyl-tRNA synthetase family. ProS type 1 subfamily. In terms of assembly, homodimer.

The protein resides in the cytoplasm. It catalyses the reaction tRNA(Pro) + L-proline + ATP = L-prolyl-tRNA(Pro) + AMP + diphosphate. Its function is as follows. Catalyzes the attachment of proline to tRNA(Pro) in a two-step reaction: proline is first activated by ATP to form Pro-AMP and then transferred to the acceptor end of tRNA(Pro). As ProRS can inadvertently accommodate and process non-cognate amino acids such as alanine and cysteine, to avoid such errors it has two additional distinct editing activities against alanine. One activity is designated as 'pretransfer' editing and involves the tRNA(Pro)-independent hydrolysis of activated Ala-AMP. The other activity is designated 'posttransfer' editing and involves deacylation of mischarged Ala-tRNA(Pro). The misacylated Cys-tRNA(Pro) is not edited by ProRS. The polypeptide is Proline--tRNA ligase (Campylobacter jejuni (strain RM1221)).